Here is a 448-residue protein sequence, read N- to C-terminus: Adenylyltransferase and sulfurtransferase UBA4 (448 aa).

Residues Gly88, Asp109, 116–120 (SNLHR), Lys133, and 177–178 (DT) contribute to the ATP site. 2 residues coordinate Zn(2+): Cys219 and Cys222. The active-site Glycyl thioester intermediate; for adenylyltransferase activity is the Cys236. Zn(2+) is bound by residues Cys297 and Cys300. One can recognise a Rhodanese domain in the interval 349 to 446 (QGENSILIDV…WSKEIDSKIP (98 aa)). The Cysteine persulfide intermediate; for sulfurtransferase activity role is filled by Cys405.

This sequence in the N-terminal section; belongs to the HesA/MoeB/ThiF family. UBA4 subfamily. It depends on Zn(2+) as a cofactor.

The protein localises to the cytoplasm. It localises to the cytosol. It participates in tRNA modification; 5-methoxycarbonylmethyl-2-thiouridine-tRNA biosynthesis. Plays a central role in 2-thiolation of mcm(5)S(2)U at tRNA wobble positions of cytosolic tRNA(Lys), tRNA(Glu) and tRNA(Gln). Acts by mediating the C-terminal thiocarboxylation of sulfur carrier URM1. Its N-terminus first activates URM1 as acyl-adenylate (-COAMP), then the persulfide sulfur on the catalytic cysteine is transferred to URM1 to form thiocarboxylation (-COSH) of its C-terminus. The reaction probably involves hydrogen sulfide that is generated from the persulfide intermediate and that acts as a nucleophile towards URM1. Subsequently, a transient disulfide bond is formed. Does not use thiosulfate as sulfur donor; NFS1 probably acting as a sulfur donor for thiocarboxylation reactions. Prior mcm(5) tRNA modification by the elongator complex is required for 2-thiolation. May also be involved in protein urmylation. The protein is Adenylyltransferase and sulfurtransferase UBA4 of Debaryomyces hansenii (strain ATCC 36239 / CBS 767 / BCRC 21394 / JCM 1990 / NBRC 0083 / IGC 2968) (Yeast).